The sequence spans 676 residues: Multisubstrate pseudouridine synthase 7 (676 aa).

2 disordered regions span residues 1 to 27 (MSDSSEATVKRPLDAHVGPSENAAKKL) and 87 to 110 (KMPKKPQRSKEEVNAEKESEAARR). N-acetylserine is present on serine 2. Basic and acidic residues predominate over residues 94 to 110 (RSKEEVNAEKESEAARR). The active-site Nucleophile is the aspartate 256. Positions 338-582 (GFINYFGMQR…AGSYRTVIQK (245 aa)) constitute a TRUD domain.

It belongs to the pseudouridine synthase TruD family.

The protein localises to the nucleus. It localises to the cytoplasm. It carries out the reaction uridine in 5S rRNA = pseudouridine in 5S rRNA. The catalysed reaction is uridine in snRNA = pseudouridine in snRNA. The enzyme catalyses uridine(13) in tRNA = pseudouridine(13) in tRNA. It catalyses the reaction a uridine in mRNA = a pseudouridine in mRNA. Functionally, catalyzes pseudouridylation at position 35 in U2 snRNA stem-loop II region which induces particular conformation of the mRNA-U2 snRNA duplex and places the nucleophile in an accessible position for the first step of splicing. Also catalyzes pseudouridylation at position 56 in U2 snRNA. Also catalyzes pseudouridylation at position 50 in 5S rRNA, position 13 in cytoplasmic tRNAs, and position 35 in pre-tRNA(Tyr). Pseudouridine residues in tRNAs may stabilize the local RNA conformation, favor interactions with protein partners and play an important role in the stabilization of the codon-anticodon interaction with mRNA. Also catalyzes pseudouridylation of mRNAs in response to heat shock: mediates pseudouridylation of mRNAs with the consensus sequence 5'-UGUAR-3'. The sequence is that of Multisubstrate pseudouridine synthase 7 from Saccharomyces cerevisiae (strain ATCC 204508 / S288c) (Baker's yeast).